Here is a 197-residue protein sequence, read N- to C-terminus: Imidazoleglycerol-phosphate dehydratase (197 aa).

It belongs to the imidazoleglycerol-phosphate dehydratase family.

The protein localises to the cytoplasm. It carries out the reaction D-erythro-1-(imidazol-4-yl)glycerol 3-phosphate = 3-(imidazol-4-yl)-2-oxopropyl phosphate + H2O. The protein operates within amino-acid biosynthesis; L-histidine biosynthesis; L-histidine from 5-phospho-alpha-D-ribose 1-diphosphate: step 6/9. The sequence is that of Imidazoleglycerol-phosphate dehydratase from Leptospira biflexa serovar Patoc (strain Patoc 1 / Ames).